Consider the following 232-residue polypeptide: Phosphatidylserine decarboxylase proenzyme (232 aa).

Ser190 acts as the Schiff-base intermediate with substrate; via pyruvic acid in catalysis. Ser190 is subject to Pyruvic acid (Ser); by autocatalysis.

This sequence belongs to the phosphatidylserine decarboxylase family. PSD-A subfamily. In terms of assembly, heterodimer of a large membrane-associated beta subunit and a small pyruvoyl-containing alpha subunit. The cofactor is pyruvate. Is synthesized initially as an inactive proenzyme. Formation of the active enzyme involves a self-maturation process in which the active site pyruvoyl group is generated from an internal serine residue via an autocatalytic post-translational modification. Two non-identical subunits are generated from the proenzyme in this reaction, and the pyruvate is formed at the N-terminus of the alpha chain, which is derived from the carboxyl end of the proenzyme. The post-translation cleavage follows an unusual pathway, termed non-hydrolytic serinolysis, in which the side chain hydroxyl group of the serine supplies its oxygen atom to form the C-terminus of the beta chain, while the remainder of the serine residue undergoes an oxidative deamination to produce ammonia and the pyruvoyl prosthetic group on the alpha chain.

Its subcellular location is the cell membrane. It carries out the reaction a 1,2-diacyl-sn-glycero-3-phospho-L-serine + H(+) = a 1,2-diacyl-sn-glycero-3-phosphoethanolamine + CO2. It functions in the pathway phospholipid metabolism; phosphatidylethanolamine biosynthesis; phosphatidylethanolamine from CDP-diacylglycerol: step 2/2. Its function is as follows. Catalyzes the formation of phosphatidylethanolamine (PtdEtn) from phosphatidylserine (PtdSer). The protein is Phosphatidylserine decarboxylase proenzyme of Rhizobium rhizogenes (strain K84 / ATCC BAA-868) (Agrobacterium radiobacter).